Reading from the N-terminus, the 230-residue chain is MERRRGTVPLGWVFFVLCLSASSPCAVDLGSKSSNSTCRLNVTELASIHPGETWTLHGMCISICYYENVTEDEIIGVAFTWQHNESVVDLWLYQNDTVIRNFSDITTNILQDGLKMRTVPVTKLYTSRMVTNLTVGRYDCLRCENGTMKIIERLYVRLGSLYPRPPGSGLAKHPSVSADEELSATLARDIVLVSAITLFFFLLALRIPQRLCQRLRIRLPHRYQRLRTED.

An N-terminal signal peptide occupies residues 1-21 (MERRRGTVPLGWVFFVLCLSA). Residues 22 to 184 (SSPCAVDLGS…SVSADEELSA (163 aa)) are Extracellular-facing. N-linked (GlcNAc...) asparagine; by host glycosylation is found at Asn-35, Asn-41, Asn-68, Asn-84, Asn-95, Asn-101, Asn-132, and Asn-145. Residues 185 to 205 (TLARDIVLVSAITLFFFLLAL) form a helical membrane-spanning segment. The Cytoplasmic segment spans residues 206 to 230 (RIPQRLCQRLRIRLPHRYQRLRTED).

The protein belongs to the HHV-5 UL16 protein family. In terms of assembly, interacts with host ULBP1, ULBP2 and MICB.

Its subcellular location is the host membrane. Plays a role in the escape of host immune response. Blocks the interaction between the host KLRK1 receptor with their ligand ULBP1 and ULBP2. ULBPs activate multiple signaling pathways in primary NK cells, resulting in the production of cytokines and chemokines. Therefore, the sequestration of diverse KLRK1 ligands in the endoplasmic reticulum and cis-Golgi apparatus of cells by UL16 inhibits the activation of NK cells. This is Protein UL16 (UL16) from Homo sapiens (Human).